The sequence spans 349 residues: Putative phytanoyl-CoA dioxygenase (349 aa).

2-oxoglutarate is bound by residues Lys-118 and 169–171 (HLD). Residues His-169 and Asp-171 each coordinate Fe cation.

This sequence belongs to the PhyH family. Requires Fe cation as cofactor. L-ascorbate serves as cofactor.

It carries out the reaction phytanoyl-CoA + 2-oxoglutarate + O2 = 2-hydroxyphytanoyl-CoA + succinate + CO2. The protein operates within lipid metabolism; fatty acid metabolism. In terms of biological role, converts phytanoyl-CoA to 2-hydroxyphytanoyl-CoA. The polypeptide is Putative phytanoyl-CoA dioxygenase (Dictyostelium discoideum (Social amoeba)).